A 547-amino-acid polypeptide reads, in one-letter code: Chaperonin GroEL (547 aa).

ATP is bound by residues 30 to 33, lysine 51, 87 to 91, glycine 415, 479 to 481, and aspartate 495; these read TLGP, DGTTT, and NAA.

This sequence belongs to the chaperonin (HSP60) family. Forms a cylinder of 14 subunits composed of two heptameric rings stacked back-to-back. Interacts with the co-chaperonin GroES.

The protein resides in the cytoplasm. It catalyses the reaction ATP + H2O + a folded polypeptide = ADP + phosphate + an unfolded polypeptide.. Functionally, together with its co-chaperonin GroES, plays an essential role in assisting protein folding. The GroEL-GroES system forms a nano-cage that allows encapsulation of the non-native substrate proteins and provides a physical environment optimized to promote and accelerate protein folding. The polypeptide is Chaperonin GroEL (Delftia acidovorans (strain DSM 14801 / SPH-1)).